The following is a 557-amino-acid chain: Copine-6 (557 aa).

C2 domains follow at residues 2–127 (SDPE…TKPL) and 134–263 (TAGK…MQWD). The Ca(2+) site is built by Asp167, Asp173, Asp229, Asp231, and Asp237. Residues 244–303 (STFQEMQEGTANPGQEMQWDCINPKYRDKKKNYKSSGTVVLAQCTVEKVHTFLDYIMGGC) are linker region. The 221-residue stretch at 306–526 (SFTVAIDFTA…ALAKRVLAEV (221 aa)) folds into the VWFA domain.

This sequence belongs to the copine family. Interacts (via second C2 domain) with OS9 (via C-terminus); this interaction occurs in a calcium-dependent manner in vitro. May interact with NECAB1. The cofactor is Ca(2+).

It is found in the cytoplasm. The protein localises to the cell membrane. It localises to the endosome. Its subcellular location is the cytoplasmic vesicle. The protein resides in the clathrin-coated vesicle. It is found in the perikaryon. The protein localises to the cell projection. It localises to the dendrite. In terms of biological role, calcium-dependent phospholipid-binding protein that plays a role in calcium-mediated intracellular processes. Binds phospholipid membranes in a calcium-dependent manner. Plays a role in dendrite formation by melanocytes. The protein is Copine-6 of Pongo abelii (Sumatran orangutan).